The chain runs to 383 residues: Na(+)/H(+) antiporter NhaA (383 aa).

11 helical membrane-spanning segments follow: residues 10–30 (LIGG…NNSP), 56–76 (LMHW…GLEI), 91–111 (IITP…IYLS), 121–141 (GWAI…ALLG), 150–170 (LLVI…IAIF), 174–194 (SLSL…IICN), 206–226 (VVLG…ATLA), 254–274 (PWII…ISFS), 275–295 (GISF…GLFV), 327–347 (GISL…VLAF), and 355–375 (AIKI…YIVL).

It belongs to the NhaA Na(+)/H(+) (TC 2.A.33) antiporter family.

The protein resides in the cell inner membrane. The enzyme catalyses Na(+)(in) + 2 H(+)(out) = Na(+)(out) + 2 H(+)(in). In terms of biological role, na(+)/H(+) antiporter that extrudes sodium in exchange for external protons. The sequence is that of Na(+)/H(+) antiporter NhaA from Francisella tularensis subsp. novicida (strain U112).